We begin with the raw amino-acid sequence, 201 residues long: Small ribosomal subunit protein uS2 (201 aa).

The protein belongs to the universal ribosomal protein uS2 family.

The protein is Small ribosomal subunit protein uS2 of Nanoarchaeum equitans (strain Kin4-M).